The chain runs to 295 residues: Bifunctional protein FolD (295 aa).

Residues 166-168 (GRS), Ser191, and Ile232 contribute to the NADP(+) site.

Belongs to the tetrahydrofolate dehydrogenase/cyclohydrolase family. Homodimer.

The enzyme catalyses (6R)-5,10-methylene-5,6,7,8-tetrahydrofolate + NADP(+) = (6R)-5,10-methenyltetrahydrofolate + NADPH. It catalyses the reaction (6R)-5,10-methenyltetrahydrofolate + H2O = (6R)-10-formyltetrahydrofolate + H(+). It participates in one-carbon metabolism; tetrahydrofolate interconversion. Its function is as follows. Catalyzes the oxidation of 5,10-methylenetetrahydrofolate to 5,10-methenyltetrahydrofolate and then the hydrolysis of 5,10-methenyltetrahydrofolate to 10-formyltetrahydrofolate. The protein is Bifunctional protein FolD of Rhodopseudomonas palustris (strain BisB18).